The primary structure comprises 331 residues: Polysaccharide lyase (331 aa).

The signal sequence occupies residues 1–22 (MSLPLRLALLPTLLASASAFAA). Cys-23 is lipidated: N-palmitoyl cysteine. Cys-23 carries the S-diacylglycerol cysteine lipid modification.

This sequence belongs to the polysaccharide lyase 5 family.

The protein resides in the cell outer membrane. It carries out the reaction Eliminative cleavage of alginate to give oligosaccharides with 4-deoxy-alpha-L-erythro-hex-4-enuronosyl groups at their non-reducing ends and beta-D-mannuronate at their reducing end.. It catalyses the reaction [hyaluronan](n) = n 3-(4-deoxy-beta-D-gluc-4-enuronosyl)-N-acetyl-D-glucosamine + H2O. The catalysed reaction is Eliminative cleavage of (1-&gt;4)-beta-D-glucuronans to give oligosaccharides with 4-deoxy-beta-D-gluc-4-enuronosyl groups at their non-reducing ends. Complete degradation of glucuronans results in the formation of tetrasaccharides.. With respect to regulation, is inhibited by mono- and divalent cations as well as L-ascorbic acid 6-hexadecanoate. Functionally, polysaccharide lyase that catalyzes the depolymerization of several anionic polysaccharides via a beta-elimination mechanism. Exhibits broad substrate specificity, catalyzing the degradation of not only alginate and poly-beta-D-mannuronate (poly-ManA), but poly-beta-D-glucuronate (poly-GlcA or poly-GlcUA) and hyaluronate (HA) as well. The oligosaccharide products formed by enzymatic cleavage are comprised mainly of disaccharides, with a lower abundance of trimers and pentamers. Is not active on poly-D-galacturonate, heparin and heparin sulfate. This chain is Polysaccharide lyase, found in Stenotrophomonas maltophilia (strain K279a).